Consider the following 323-residue polypeptide: Serpentine receptor class gamma-5 (323 aa).

The next 7 helical transmembrane spans lie at 31–51, 63–83, 98–117, 151–171, 193–213, 245–265, and 272–292; these read QLFY…IMLF, FIIF…DLFI, YPLF…IYNY, IPVT…NVII, WASL…ITVF, AAFF…ITAA, and FLQG…MVLI.

This sequence belongs to the nematode receptor-like protein srg family.

The protein localises to the membrane. The protein is Serpentine receptor class gamma-5 (srg-5) of Caenorhabditis elegans.